A 361-amino-acid polypeptide reads, in one-letter code: Phosphoserine aminotransferase (361 aa).

R42 is a binding site for L-glutamate. Pyridoxal 5'-phosphate contacts are provided by residues 76–77 (AR), W102, T153, D173, and Q196. Residue K197 is modified to N6-(pyridoxal phosphate)lysine. 238-239 (NT) contacts pyridoxal 5'-phosphate.

Belongs to the class-V pyridoxal-phosphate-dependent aminotransferase family. SerC subfamily. Homodimer. Pyridoxal 5'-phosphate serves as cofactor.

The protein resides in the cytoplasm. It catalyses the reaction O-phospho-L-serine + 2-oxoglutarate = 3-phosphooxypyruvate + L-glutamate. It carries out the reaction 4-(phosphooxy)-L-threonine + 2-oxoglutarate = (R)-3-hydroxy-2-oxo-4-phosphooxybutanoate + L-glutamate. It functions in the pathway amino-acid biosynthesis; L-serine biosynthesis; L-serine from 3-phospho-D-glycerate: step 2/3. The protein operates within cofactor biosynthesis; pyridoxine 5'-phosphate biosynthesis; pyridoxine 5'-phosphate from D-erythrose 4-phosphate: step 3/5. Its function is as follows. Catalyzes the reversible conversion of 3-phosphohydroxypyruvate to phosphoserine and of 3-hydroxy-2-oxo-4-phosphonooxybutanoate to phosphohydroxythreonine. The protein is Phosphoserine aminotransferase of Yersinia pestis bv. Antiqua (strain Angola).